The primary structure comprises 61 residues: Photosystem II reaction center protein K (61 aa).

A propeptide spanning residues 1-24 (MLNTFSLIGICLNSTLYSSSFFFG) is cleaved from the precursor. Residues 36-56 (IVDIMPVIPLFFFLLAFVWQA) traverse the membrane as a helical segment.

It belongs to the PsbK family. In terms of assembly, PSII is composed of 1 copy each of membrane proteins PsbA, PsbB, PsbC, PsbD, PsbE, PsbF, PsbH, PsbI, PsbJ, PsbK, PsbL, PsbM, PsbT, PsbX, PsbY, PsbZ, Psb30/Ycf12, at least 3 peripheral proteins of the oxygen-evolving complex and a large number of cofactors. It forms dimeric complexes.

It is found in the plastid. The protein localises to the chloroplast thylakoid membrane. In terms of biological role, one of the components of the core complex of photosystem II (PSII). PSII is a light-driven water:plastoquinone oxidoreductase that uses light energy to abstract electrons from H(2)O, generating O(2) and a proton gradient subsequently used for ATP formation. It consists of a core antenna complex that captures photons, and an electron transfer chain that converts photonic excitation into a charge separation. This chain is Photosystem II reaction center protein K, found in Solanum bulbocastanum (Wild potato).